The sequence spans 184 residues: MKKHLLFLGPPGAGKGTQAALLSAANSYLHLSTGELLRKEIDLDTDLGKQVKDIMNRGELVSDQLVLEIVKKNLDKDNNGWILDGYPRNLSQVNSLNDVLININQPLEIVFYLDIPDEVLIKRLLIRGRKDDNEKTIKTRLKIYKETTEPLIEYYKDLALLENIKADGDLKTISADIKQKMACR.

12–17 (GAGKGT) contributes to the ATP binding site. The NMP stretch occupies residues 32-61 (STGELLRKEIDLDTDLGKQVKDIMNRGELV). Residues threonine 33, arginine 38, 59–61 (ELV), 85–88 (GYPR), and glutamine 92 each bind AMP. Residues 126 to 132 (IRGRKDD) are LID. Arginine 127 provides a ligand contact to ATP. AMP-binding residues include arginine 129 and arginine 140. Position 168 (glycine 168) interacts with ATP.

Belongs to the adenylate kinase family. In terms of assembly, monomer.

Its subcellular location is the cytoplasm. It carries out the reaction AMP + ATP = 2 ADP. It functions in the pathway purine metabolism; AMP biosynthesis via salvage pathway; AMP from ADP: step 1/1. In terms of biological role, catalyzes the reversible transfer of the terminal phosphate group between ATP and AMP. Plays an important role in cellular energy homeostasis and in adenine nucleotide metabolism. The chain is Adenylate kinase from Prochlorococcus marinus subsp. pastoris (strain CCMP1986 / NIES-2087 / MED4).